Consider the following 128-residue polypeptide: Probable heavy metal-dependent transcriptional regulator HI_0293 (128 aa).

An HTH merR-type domain is found at 1–69 (MNISEAAKLV…LHQIAQLLAL (69 aa)). Positions 4 to 23 (SEAAKLVGLSTKQIRDYEKM) form a DNA-binding region, H-T-H motif.

It is found in the cytoplasm. Its function is as follows. Could be a copper-dependent transcriptional activator of the ATPase HI_0290. This chain is Probable heavy metal-dependent transcriptional regulator HI_0293, found in Haemophilus influenzae (strain ATCC 51907 / DSM 11121 / KW20 / Rd).